A 390-amino-acid polypeptide reads, in one-letter code: Probable purine permease 18 (390 aa).

Polar residues predominate over residues 1 to 14 (MEMTEASKQTTAEG). Residues 1 to 23 (MEMTEASKQTTAEGSANPEPDQI) form a disordered region. A Phosphoserine modification is found at Ser25. The next 10 membrane-spanning stretches (helical) occupy residues 39–59 (ISVS…MLLL), 81–101 (WLQA…FFIF), 120–140 (LILL…LFAL), 148–168 (GVFT…AAII), 176–196 (WIIL…PEFG), 211–231 (WLTF…QLCF), 250–270 (VIEM…VGLF), 297–317 (IGLA…VLYV), 324–344 (VVHM…FDFM), and 348–368 (FSWP…SYFY).

Belongs to the purine permeases (TC 2.A.7.14) family.

It is found in the membrane. This Arabidopsis thaliana (Mouse-ear cress) protein is Probable purine permease 18 (PUP18).